Consider the following 25-residue polypeptide: Histone H1.1 (25 aa).

Positions 1–25 (MVSEAIAALKEREGSSEFAIGKKKE) constitute an H15 domain. A disordered region spans residues 1 to 25 (MVSEAIAALKEREGSSEFAIGKKKE). The segment covering 9–25 (LKEREGSSEFAIGKKKE) has biased composition (basic and acidic residues).

The protein localises to the nucleus. Its subcellular location is the chromosome. In terms of biological role, histones H1 are necessary for the condensation of nucleosome chains into higher-order structures. The protein is Histone H1.1 of Triticum aestivum (Wheat).